The sequence spans 951 residues: Serine/threonine-protein kinase ATG1 (951 aa).

Residues 22–327 (FTINEEIGKG…FPEYFAHPVV (306 aa)) enclose the Protein kinase domain. ATP contacts are provided by residues 28–36 (IGKGSFATV) and K51. D165 (proton acceptor) is an active-site residue. Disordered stretches follow at residues 343–375 (IITP…PVET), 387–458 (EQAP…YDEQ), 514–573 (HIPK…SSPS), and 924–951 (HQSM…TPPH). Composition is skewed to basic and acidic residues over residues 359–368 (SLRERQRENP) and 432–442 (PRQRDRTERHY). Composition is skewed to polar residues over residues 547-573 (AQGN…SSPS) and 939-951 (GGTT…TPPH).

It belongs to the protein kinase superfamily. Ser/Thr protein kinase family. APG1/unc-51/ULK1 subfamily. As to quaternary structure, homodimer. Forms a ternary complex with ATG13 and ATG17.

It is found in the cytoplasm. The protein resides in the preautophagosomal structure membrane. The enzyme catalyses L-seryl-[protein] + ATP = O-phospho-L-seryl-[protein] + ADP + H(+). It catalyses the reaction L-threonyl-[protein] + ATP = O-phospho-L-threonyl-[protein] + ADP + H(+). Functionally, serine/threonine protein kinase involved in the cytoplasm to vacuole transport (Cvt) and found to be essential in autophagy, where it is required for the formation of autophagosomes. Involved in the clearance of protein aggregates which cannot be efficiently cleared by the proteasome. Required for selective autophagic degradation of the nucleus (nucleophagy) as well as for mitophagy which contributes to regulate mitochondrial quantity and quality by eliminating the mitochondria to a basal level to fulfill cellular energy requirements and preventing excess ROS production. Also involved in endoplasmic reticulum-specific autophagic process, in selective removal of ER-associated degradation (ERAD) substrates. Plays a key role in ATG9 and ATG23 cycling through the pre-autophagosomal structure and is necessary to promote ATG18 binding to ATG9 through phosphorylation of ATG9. Catalyzes phosphorylation of ATG4, decreasing the interaction between ATG4 and ATG8 and impairing deconjugation of PE-conjugated forms of ATG8. This is Serine/threonine-protein kinase ATG1 from Sclerotinia sclerotiorum (strain ATCC 18683 / 1980 / Ss-1) (White mold).